We begin with the raw amino-acid sequence, 406 residues long: Probable tRNA sulfurtransferase (406 aa).

Positions 60-166 constitute a THUMP domain; that stretch reads EPVMERLKQV…LNGIYLTSAK (107 aa). Residues 184 to 185, 209 to 210, Arg-266, Gly-288, and Gln-297 each bind ATP; these read ML and HF.

The protein belongs to the ThiI family.

The protein resides in the cytoplasm. The catalysed reaction is [ThiI sulfur-carrier protein]-S-sulfanyl-L-cysteine + a uridine in tRNA + 2 reduced [2Fe-2S]-[ferredoxin] + ATP + H(+) = [ThiI sulfur-carrier protein]-L-cysteine + a 4-thiouridine in tRNA + 2 oxidized [2Fe-2S]-[ferredoxin] + AMP + diphosphate. It carries out the reaction [ThiS sulfur-carrier protein]-C-terminal Gly-Gly-AMP + S-sulfanyl-L-cysteinyl-[cysteine desulfurase] + AH2 = [ThiS sulfur-carrier protein]-C-terminal-Gly-aminoethanethioate + L-cysteinyl-[cysteine desulfurase] + A + AMP + 2 H(+). The protein operates within cofactor biosynthesis; thiamine diphosphate biosynthesis. Its function is as follows. Catalyzes the ATP-dependent transfer of a sulfur to tRNA to produce 4-thiouridine in position 8 of tRNAs, which functions as a near-UV photosensor. Also catalyzes the transfer of sulfur to the sulfur carrier protein ThiS, forming ThiS-thiocarboxylate. This is a step in the synthesis of thiazole, in the thiamine biosynthesis pathway. The sulfur is donated as persulfide by IscS. The sequence is that of Probable tRNA sulfurtransferase from Limosilactobacillus fermentum (strain NBRC 3956 / LMG 18251) (Lactobacillus fermentum).